We begin with the raw amino-acid sequence, 222 residues long: N-(5'-phosphoribosyl)anthranilate isomerase (222 aa).

Belongs to the TrpF family.

The enzyme catalyses N-(5-phospho-beta-D-ribosyl)anthranilate = 1-(2-carboxyphenylamino)-1-deoxy-D-ribulose 5-phosphate. It participates in amino-acid biosynthesis; L-tryptophan biosynthesis; L-tryptophan from chorismate: step 3/5. The protein is N-(5'-phosphoribosyl)anthranilate isomerase of Rhizobium leguminosarum bv. trifolii (strain WSM2304).